A 296-amino-acid polypeptide reads, in one-letter code: tRNA dimethylallyltransferase (296 aa).

Residue 8 to 15 (GPTGSGKT) coordinates ATP. Residue 10 to 15 (TGSGKT) coordinates substrate. Positions 32-35 (DSRQ) are interaction with substrate tRNA.

Belongs to the IPP transferase family. As to quaternary structure, monomer. Mg(2+) is required as a cofactor.

The enzyme catalyses adenosine(37) in tRNA + dimethylallyl diphosphate = N(6)-dimethylallyladenosine(37) in tRNA + diphosphate. Functionally, catalyzes the transfer of a dimethylallyl group onto the adenine at position 37 in tRNAs that read codons beginning with uridine, leading to the formation of N6-(dimethylallyl)adenosine (i(6)A). The sequence is that of tRNA dimethylallyltransferase from Leptospira biflexa serovar Patoc (strain Patoc 1 / Ames).